Here is a 262-residue protein sequence, read N- to C-terminus: Tetrahydromethanopterin S-methyltransferase subunit C (262 aa).

Transmembrane regions (helical) follow at residues L27–L47, P72–I92, L98–V118, A145–I165, V173–I193, K200–A220, and L222–V242.

Belongs to the MtrC family. As to quaternary structure, the complex is composed of 8 subunits; MtrA, MtrB, MtrC, MtrD, MtrE, MtrF, MtrG and MtrH.

The protein localises to the cell membrane. The enzyme catalyses 5-methyl-5,6,7,8-tetrahydromethanopterin + coenzyme M + 2 Na(+)(in) = 5,6,7,8-tetrahydromethanopterin + methyl-coenzyme M + 2 Na(+)(out). It participates in one-carbon metabolism; methanogenesis from CO(2); methyl-coenzyme M from 5,10-methylene-5,6,7,8-tetrahydromethanopterin: step 2/2. Functionally, part of a complex that catalyzes the formation of methyl-coenzyme M and tetrahydromethanopterin from coenzyme M and methyl-tetrahydromethanopterin. This is an energy-conserving, sodium-ion translocating step. The sequence is that of Tetrahydromethanopterin S-methyltransferase subunit C from Methanococcus maripaludis (strain C5 / ATCC BAA-1333).